We begin with the raw amino-acid sequence, 236 residues long: MAVISMKQLLEAGVHFGHQTRRWNPKMARYIFTERNGIYIIDLQKTVKKVEEAYNFVRELAQDGGKILFVGTKKQAQESVKEEAERTGHYFINQRWLGGTLTNFTTIKKRTARLAELKRMENDGTFAVLPKKEVIVLRKEMDRLEKFLGGIAHMDKLPDALFVIDPRKERIAVAEARKLGIPIVAIVDTNCDPDEIDYVIPGNDDAIRAVKLLTAKMADALLEGNQGTEQQATTTA.

The protein belongs to the universal ribosomal protein uS2 family.

The sequence is that of Small ribosomal subunit protein uS2 from Brevibacillus brevis (strain 47 / JCM 6285 / NBRC 100599).